Here is a 517-residue protein sequence, read N- to C-terminus: N-acetylglucosamine-1-phosphodiester alpha-N-acetylglucosaminidase (517 aa).

Positions 1 to 25 (MAAPRGPGLFLIPALLGLLGVAWCS) are cleaved as a signal peptide. A propeptide spans 26-49 (LSFGVSRDDDLLLPYPLARRRPSR) (removed in mature form). Positions 49–75 (RDCARVRSGSPEQESWPPPPTNPGASH) are disordered. At 50–453 (DCARVRSGSP…ASFTRTTWLA (404 aa)) the chain is on the lumenal side. Intrachain disulfides connect Cys-116–Cys-149, Cys-133–Cys-324, Cys-308–Cys-315, Cys-363–Cys-374, and Cys-381–Cys-390. 2 N-linked (GlcNAc...) asparagine glycosylation sites follow: Asn-215 and Asn-297. In terms of domain architecture, EGF-like spans 359-391 (SELDCGPSNCSQHGLCTETGCHCDAGWTGSNCS). Asn-367, Asn-389, and Asn-421 each carry an N-linked (GlcNAc...) asparagine glycan. The chain crosses the membrane as a helical span at residues 454 to 474 (LTLTLIFLLLISTGVNVSLFL). The Cytoplasmic portion of the chain corresponds to 475 to 517 (GSRAERNRHLDGDYVYHPLQEVNGEALTAEKEHMEETSNPFKD). The Tyrosine-based internalization motif signature appears at 488-491 (YVYH). The segment at 488-495 (YVYHPLQE) is mediates the interaction with AP4M1. The short motif at 511–515 (TSNPF) is the NPF internalization motif element.

In terms of assembly, homotetramer arranged as two disulfide-linked homodimers. Interacts with AP4M1. In terms of processing, the precursor is cleaved and activated in the trans-Golgi network by a furin endopeptidase.

The protein localises to the golgi apparatus. Its subcellular location is the golgi stack membrane. It is found in the trans-Golgi network. The enzyme catalyses N(4)-[6-(N-acetyl-alpha-D-glucosaminyl-1-phospho)-alpha-D-mannosyl-(1-&gt;2)-alpha-D-mannosyl-(glycan)]-L-asparaginyl-[protein] + H2O = N(4)-[6-phospho-alpha-D-mannosyl-(1-&gt;2)-alpha-D-mannosyl-(glycan)]-L-asparaginyl-[protein] + N-acetyl-D-glucosamine + H(+). It functions in the pathway protein modification; protein glycosylation. Catalyzes the second step in the formation of the mannose 6-phosphate targeting signal on lysosomal enzyme oligosaccharides by removing GlcNAc residues from GlcNAc-alpha-P-mannose moieties, which are formed in the first step. Also hydrolyzes UDP-GlcNAc, a sugar donor for Golgi N-acetylglucosaminyltransferases. The chain is N-acetylglucosamine-1-phosphodiester alpha-N-acetylglucosaminidase (Nagpa) from Mus musculus (Mouse).